A 225-amino-acid polypeptide reads, in one-letter code: Small ribosomal subunit protein uS5 (225 aa).

One can recognise an S5 DRBM domain in the interval 57 to 120 (LEEQVLDVKL…AHAKLSLIKV (64 aa)).

This sequence belongs to the universal ribosomal protein uS5 family. Part of the 30S ribosomal subunit. Contacts protein S4.

Its function is as follows. With S4 and S12 plays an important role in translational accuracy. In Methanococcus maripaludis (strain DSM 14266 / JCM 13030 / NBRC 101832 / S2 / LL), this protein is Small ribosomal subunit protein uS5.